The chain runs to 401 residues: L-rhamnonate dehydratase (401 aa).

Substrate contacts are provided by histidine 29 and arginine 55. Mg(2+) is bound by residues aspartate 222, glutamate 248, and glutamate 276. Histidine 325 acts as the Proton acceptor in catalysis. Residue glutamate 345 coordinates substrate.

This sequence belongs to the mandelate racemase/muconate lactonizing enzyme family. RhamD subfamily. In terms of assembly, homooctamer; tetramer of dimers. It depends on Mg(2+) as a cofactor.

The catalysed reaction is L-rhamnonate = 2-dehydro-3-deoxy-L-rhamnonate + H2O. In terms of biological role, catalyzes the dehydration of L-rhamnonate to 2-keto-3-deoxy-L-rhamnonate (KDR). In Salmonella heidelberg (strain SL476), this protein is L-rhamnonate dehydratase.